A 171-amino-acid chain; its full sequence is Large ribosomal subunit protein uL10 (171 aa).

This sequence belongs to the universal ribosomal protein uL10 family. As to quaternary structure, part of the ribosomal stalk of the 50S ribosomal subunit. The N-terminus interacts with L11 and the large rRNA to form the base of the stalk. The C-terminus forms an elongated spine to which L12 dimers bind in a sequential fashion forming a multimeric L10(L12)X complex.

In terms of biological role, forms part of the ribosomal stalk, playing a central role in the interaction of the ribosome with GTP-bound translation factors. The chain is Large ribosomal subunit protein uL10 from Corynebacterium glutamicum (strain R).